Reading from the N-terminus, the 879-residue chain is Levansucrase (879 aa).

An N-terminal signal peptide occupies residues 1–37 (MTKEHKKMYKAGKYWAVATLVSASILMEVGVTTHADA). 7 consecutive repeat copies span residues 66 to 81 (DNAT…SIAN), 82 to 97 (DNAT…SIAN), 98 to 113 (DNAT…SIAN), 114 to 129 (DNAT…SVAN), 130 to 145 (DNAT…SVAN), 146 to 161 (DNAT…SVAN), and 162 to 177 (DNAT…SVAN). The interval 66–177 (DNATSGSTKQ…STKQESSVAN (112 aa)) is 7 X 16 AA tandem repeats of D-N-A-T-S-G-S-T-K-Q-E-S-S-[IV]-A-N. Polar residues-rich tracts occupy residues 66 to 180 (DNAT…NDTK) and 189 to 213 (NTSN…AATQ). The segment at 66–213 (DNATSGSTKQ…NNEQPSAATQ (148 aa)) is disordered. Sucrose is bound by residues Trp311, Asp312, and Ser382. Asp312 (nucleophile) is an active-site residue. Position 460 (Asp460) interacts with Ca(2+). Sucrose contacts are provided by Arg465 and Asp466. Ca(2+) is bound by residues Gln491, Leu528, Asn530, and Asp562. Glu563 contributes to the sucrose binding site. Glu565 acts as the Proton donor/acceptor in catalysis. Arg583 lines the sucrose pocket. Residues 743 to 830 (SSGLGLKPHQ…TPAKPVQAGQ (88 aa)) form a disordered region. The segment covering 754–821 (VNPSQPTTPA…KPVNPSQPTT (68 aa)) has biased composition (polar residues). The LPXTG sorting signal motif lies at 841-845 (LPQTG). Thr844 is subject to Pentaglycyl murein peptidoglycan amidated threonine. The propeptide at 845 to 879 (GENNSQSQTMSFIGILLAMFGSLLGFLGIKKRRND) is removed by sortase.

The protein belongs to the glycosyl hydrolase 68 family.

It is found in the secreted. The protein localises to the cell wall. It carries out the reaction [6)-beta-D-fructofuranosyl-(2-&gt;](n) alpha-D-glucopyranoside + sucrose = [6)-beta-D-fructofuranosyl-(2-&gt;](n+1) alpha-D-glucopyranoside + D-glucose. With respect to regulation, ca(2+) may play an important structural role and promote stability of levansucrase. Its function is as follows. Fructosyltransferase that catalyzes the polymerization of the fructose moiety of sucrose to produce levan polymer and the fructo-oligosaccharide (FOS) 1-kestose. Also displays sucrose hydrolase activity. This chain is Levansucrase, found in Fructilactobacillus sanfranciscensis (Lactobacillus sanfranciscensis).